A 78-amino-acid chain; its full sequence is Translational regulator CsrA (78 aa).

The protein belongs to the CsrA/RsmA family. In terms of assembly, homodimer; the beta-strands of each monomer intercalate to form a hydrophobic core, while the alpha-helices form wings that extend away from the core.

The protein localises to the cytoplasm. Its function is as follows. A translational regulator that binds mRNA to regulate translation initiation and/or mRNA stability. Usually binds in the 5'-UTR at or near the Shine-Dalgarno sequence preventing ribosome-binding, thus repressing translation. Its main target seems to be the major flagellin gene, while its function is anatagonized by FliW. This is Translational regulator CsrA from Borrelia hermsii (strain HS1 / DAH).